A 48-amino-acid chain; its full sequence is ATP synthase protein 8 (48 aa).

A helical membrane pass occupies residues L13–P33.

Belongs to the ATPase protein 8 family. As to quaternary structure, F-type ATPases have 2 components, CF(1) - the catalytic core - and CF(0) - the membrane proton channel.

The protein resides in the mitochondrion membrane. Its function is as follows. Mitochondrial membrane ATP synthase (F(1)F(0) ATP synthase or Complex V) produces ATP from ADP in the presence of a proton gradient across the membrane which is generated by electron transport complexes of the respiratory chain. F-type ATPases consist of two structural domains, F(1) - containing the extramembraneous catalytic core and F(0) - containing the membrane proton channel, linked together by a central stalk and a peripheral stalk. During catalysis, ATP synthesis in the catalytic domain of F(1) is coupled via a rotary mechanism of the central stalk subunits to proton translocation. Part of the complex F(0) domain. Minor subunit located with subunit a in the membrane. The protein is ATP synthase protein 8 (ATP8) of Wickerhamomyces canadensis (Yeast).